Reading from the N-terminus, the 572-residue chain is Putative carbohydrate transport ATP-binding protein MPN_258 (572 aa).

ABC transporter domains lie at 6–253 (FRME…MGKE) and 327–572 (RFIR…LIMQ). Residue 40–47 (GENGAGKS) coordinates ATP.

The protein belongs to the ABC transporter superfamily.

It is found in the cell membrane. Functionally, part of the ABC transporter complex involved in carbohydrates import. Probably responsible for energy coupling to the transport system. In Mycoplasma pneumoniae (strain ATCC 29342 / M129 / Subtype 1) (Mycoplasmoides pneumoniae), this protein is Putative carbohydrate transport ATP-binding protein MPN_258.